A 274-amino-acid polypeptide reads, in one-letter code: uncharacterized protein (274 aa).

This is an uncharacterized protein from Invertebrate iridescent virus 6 (IIV-6).